Consider the following 372-residue polypeptide: MLLNVTSSQYISTPQSRSLSEIDTSETASLSSATDHIFALSTEVVSSITTNLIEGLESSIQVPISTAYGTTSFRNNTSSPQYLVSNCTSSVQSNITIDRGLLSTLKTFTTSQVPTIEPSTTKLTTPLSTTFTSTSTSEIYSVFTSENSVYIIYDQEYKFTERSTTFNTHFPQTTVLQESNPPLTFTIPSNTITGDAKLYQYLSGALNTQDTSDANNRRTGVIVGSTVGVVIGVVIVIFIGFIIIRNRRNVKNHSKKGFSHDIGKRVSCDEVTETEAPSNPFLNVLNYKVTTNGEGKRDSFENGRDLHRASSSDGIYIAHPYYGMADHESGRFSYVSSYNESAESSIEETSSSASTITRPNIQQTNSFLREII.

The chain crosses the membrane as a helical span at residues 224–244 (GSTVGVVIGVVIVIFIGFIII). At Ser329 the chain carries Phosphoserine.

The protein localises to the vacuole membrane. This is an uncharacterized protein from Saccharomyces cerevisiae (strain ATCC 204508 / S288c) (Baker's yeast).